Here is a 356-residue protein sequence, read N- to C-terminus: tRNA N6-adenosine threonylcarbamoyltransferase (356 aa).

Fe cation-binding residues include His-115 and His-119. Substrate-binding positions include 138–142 (LVSGG), Asp-171, Gly-184, and Asn-283. Fe cation is bound at residue Asp-311.

This sequence belongs to the KAE1 / TsaD family. Fe(2+) serves as cofactor.

The protein localises to the cytoplasm. The enzyme catalyses L-threonylcarbamoyladenylate + adenosine(37) in tRNA = N(6)-L-threonylcarbamoyladenosine(37) in tRNA + AMP + H(+). In terms of biological role, required for the formation of a threonylcarbamoyl group on adenosine at position 37 (t(6)A37) in tRNAs that read codons beginning with adenine. Is involved in the transfer of the threonylcarbamoyl moiety of threonylcarbamoyl-AMP (TC-AMP) to the N6 group of A37, together with TsaE and TsaB. TsaD likely plays a direct catalytic role in this reaction. The protein is tRNA N6-adenosine threonylcarbamoyltransferase of Prochlorococcus marinus (strain NATL2A).